A 499-amino-acid chain; its full sequence is NAD(P)H-quinone oxidoreductase chain 4, chloroplastic (499 aa).

The next 14 membrane-spanning stretches (helical) occupy residues 4-24 (LPWL…IPLF), 31-51 (MIRW…TYIF), 87-107 (IGLI…AWPV), 113-130 (LLHF…GLFA), 134-154 (ILLF…LLSM), 167-187 (FLLY…SMGL), 211-231 (ILLY…FPLH), 242-262 (HYST…YGLI), 274-294 (SLFS…AALT), 305-325 (IAYS…SMTY), 330-350 (GAIL…FLVG), 386-406 (LALP…GVIT), 416-436 (IIIT…LLSM), and 462-482 (LFIL…PDLV).

It belongs to the complex I subunit 4 family.

The protein resides in the plastid. Its subcellular location is the chloroplast thylakoid membrane. The catalysed reaction is a plastoquinone + NADH + (n+1) H(+)(in) = a plastoquinol + NAD(+) + n H(+)(out). It carries out the reaction a plastoquinone + NADPH + (n+1) H(+)(in) = a plastoquinol + NADP(+) + n H(+)(out). The sequence is that of NAD(P)H-quinone oxidoreductase chain 4, chloroplastic from Cryptomeria japonica (Japanese cedar).